Reading from the N-terminus, the 406-residue chain is Acetylornithine/succinyldiaminopimelate aminotransferase (406 aa).

Pyridoxal 5'-phosphate contacts are provided by residues 108–109 (GT) and phenylalanine 141. Arginine 144 serves as a coordination point for N(2)-acetyl-L-ornithine. 226-229 (DEVQ) is a binding site for pyridoxal 5'-phosphate. Lysine 255 carries the post-translational modification N6-(pyridoxal phosphate)lysine. Serine 283 contacts N(2)-acetyl-L-ornithine. Threonine 284 serves as a coordination point for pyridoxal 5'-phosphate.

Belongs to the class-III pyridoxal-phosphate-dependent aminotransferase family. ArgD subfamily. As to quaternary structure, homodimer. The cofactor is pyridoxal 5'-phosphate.

Its subcellular location is the cytoplasm. It carries out the reaction N(2)-acetyl-L-ornithine + 2-oxoglutarate = N-acetyl-L-glutamate 5-semialdehyde + L-glutamate. The enzyme catalyses N-succinyl-(2S,6S)-2,6-diaminopimelate + 2-oxoglutarate = (S)-2-succinylamino-6-oxoheptanedioate + L-glutamate. It participates in amino-acid biosynthesis; L-arginine biosynthesis; N(2)-acetyl-L-ornithine from L-glutamate: step 4/4. It functions in the pathway amino-acid biosynthesis; L-lysine biosynthesis via DAP pathway; LL-2,6-diaminopimelate from (S)-tetrahydrodipicolinate (succinylase route): step 2/3. In terms of biological role, involved in both the arginine and lysine biosynthetic pathways. The polypeptide is Acetylornithine/succinyldiaminopimelate aminotransferase (Escherichia coli O6:H1 (strain CFT073 / ATCC 700928 / UPEC)).